An 884-amino-acid chain; its full sequence is Androgen receptor (884 aa).

A modulating region spans residues 1 to 522; sequence MEVQLGLGRV…PIDYYFPPQK (522 aa). Residues 1-551 form an interaction with ZNF318 region; it reads MEVQLGLGRV…GSCKVFFKRA (551 aa). Disordered stretches follow at residues 33-145 and 174-207; these read VIQN…TLSL and QQQQ…YLGG. Low complexity-rich tracts occupy residues 55–79 and 174–196; these read QQQQ…PQAQ and QQQQ…AAGA. The residue at position 61 (serine 61) is a Phosphoserine; by CDK9. A Phosphoserine modification is found at serine 75. Residues 197 to 207 are compositionally biased toward polar residues; the sequence is PTSSKDSYLGG. Position 204 is a phosphotyrosine; by CSK (tyrosine 204). Serine 237 carries the post-translational modification Phosphoserine. Tyrosine 248 carries the phosphotyrosine; by CSK and TNK2 modification. The disordered stretch occupies residues 275-294; that stretch reads DDSADKGTEEPAEYTPFKGS. A phosphotyrosine; by CSK mark is found at tyrosine 288, tyrosine 327, tyrosine 338, and tyrosine 343. Position 344 is a phosphotyrosine; by CSK and TNK2 (tyrosine 344). Lysine 367 participates in a covalent cross-link: Glycyl lysine isopeptide (Lys-Gly) (interchain with G-Cter in SUMO). Phosphotyrosine; by CSK is present on tyrosine 374. Lysine 485 participates in a covalent cross-link: Glycyl lysine isopeptide (Lys-Gly) (interchain with G-Cter in SUMO). Residues tyrosine 499 and tyrosine 516 each carry the phosphotyrosine; by CSK modification. The interaction with LPXN stretch occupies residues 516–883; sequence YYFPPQKTCL…GKVKPIYFHT (368 aa). A DNA-binding region (nuclear receptor) is located at residues 523–596; sequence TCLICGDEAS…AGMTLGARKL (74 aa). NR C4-type zinc fingers lie at residues 524 to 544 and 560 to 584; these read CLIC…CGSC and CASR…LRKC. The segment at 536 to 626 is interaction with HIPK3; it reads YGALTCGSCK…TEESSQKLTV (91 aa). An interaction with CCAR1 region spans residues 556–883; that stretch reads QKYLCASRND…GKVKPIYFHT (328 aa). The tract at residues 589 to 883 is interaction with KAT7; that stretch reads MTLGARKLKK…GKVKPIYFHT (295 aa). Phosphoserine; by STK4/MST1 is present on serine 615. In terms of domain architecture, NR LBD spans 633–864; sequence ECQPIFLNVL…DFPEMMAEII (232 aa). 17beta-hydroxy-5alpha-androstan-3-one-binding residues include asparagine 670 and arginine 717. Residues lysine 810 and lysine 812 each participate in a glycyl lysine isopeptide (Lys-Gly) (interchain with G-Cter in ubiquitin) cross-link. Threonine 842 provides a ligand contact to 17beta-hydroxy-5alpha-androstan-3-one. Position 880 is a phosphotyrosine; by CSK (tyrosine 880).

The protein belongs to the nuclear hormone receptor family. NR3 subfamily. As to quaternary structure, binds DNA as a homodimer. Part of a ternary complex containing AR, EFCAB6/DJBP and PARK7. Interacts with HIPK3 and NR0B2 in the presence of androgen. The ligand binding domain interacts with KAT7/HBO1 in the presence of dihydrotestosterone. Interacts with EFCAB6/DJBP, PQBP1, RANBP9, RBAK, SPDEF, SRA1, TGFB1I1 and RREB1. Interacts with ZMIZ1/ZIMP10 and ZMIZ2/ZMIP7 which both enhance its transactivation activity. Interacts with SLC30A9 and RAD54L2/ARIP4. Interacts with MACROD1 (via macro domain). Interacts via the ligand-binding domain with LXXLL and FXXLF motifs from NCOA1, NCOA2, NCOA3 and MAGEA11. Interacts (via nuclear receptor DNA binding domain and nuclear receptor ligand binding domain) with NCOA4. The AR N-terminal poly-Gln region binds Ran resulting in enhancement of AR-mediated transactivation. Ran-binding decreases as the poly-Gln length increases. Interacts with HIP1 (via coiled coil domain). Interacts (via ligand-binding domain) with TRIM68. Interacts with TNK2. Interacts with USP26. Interacts with RNF6. Interacts (regulated by RNF6 probably through polyubiquitination) with RNF14; regulates AR transcriptional activity. Interacts with PRMT2 and TRIM24. Interacts with RACK1. Interacts with RANBP10; this interaction enhances dihydrotestosterone-induced AR transcriptional activity. Interacts with PRPF6 in a hormone-independent way; this interaction enhances dihydrotestosterone-induced AR transcriptional activity. Interacts with STK4/MST1. Interacts with ZIPK/DAPK3. Interacts with LPXN. Interacts with MAK. Part of a complex containing AR, MAK and NCOA3. Interacts with CRY1. Interacts with CCAR1 and GATA2. Interacts with ZNF318. Interacts with BUD31. Interacts with ARID4A. Interacts with ARID4B. Interacts (via NR LBD domain) with ZBTB7A; the interaction is direct and androgen-dependent. Interacts with NCOR1. Interacts with NCOR2. Interacts with CRY2 in a ligand-dependent manner. Phosphorylated in prostate cancer cells in response to several growth factors including EGF. Phosphorylation is induced by c-Src kinase (CSK). Tyr-499 is one of the major phosphorylation sites and an increase in phosphorylation and Src kinase activity is associated with prostate cancer progression. Phosphorylation by TNK2 enhances the DNA-binding and transcriptional activity. Phosphorylation at Ser-61 by CDK9 regulates AR promoter selectivity and cell growth. Post-translationally, sumoylated on Lys-367 (major) and Lys-485. Ubiquitinated. Deubiquitinated by USP26. 'Lys-6' and 'Lys-27'-linked polyubiquitination by RNF6 modulates AR transcriptional activity and specificity. In terms of processing, palmitoylated by ZDHHC7 and ZDHHC21. Palmitoylation is required for plasma membrane targeting and for rapid intracellular signaling via ERK and AKT kinases and cAMP generation.

The protein resides in the nucleus. It is found in the cytoplasm. Its function is as follows. Steroid hormone receptors are ligand-activated transcription factors that regulate eukaryotic gene expression and affect cellular proliferation and differentiation in target tissues. Transcription factor activity is modulated by bound coactivator and corepressor proteins like ZBTB7A that recruits NCOR1 and NCOR2 to the androgen response elements/ARE on target genes, negatively regulating androgen receptor signaling and androgen-induced cell proliferation. Transcription activation is also down-regulated by NR0B2. Activated, but not phosphorylated, by HIPK3 and ZIPK/DAPK3. The polypeptide is Androgen receptor (AR) (Eulemur fulvus collaris (Collared brown lemur)).